Consider the following 41-residue polypeptide: Pathogenesis-related protein (41 aa).

Belongs to the CRISP family.

Its function is as follows. Probably involved in the defense reaction of plants against pathogens. This chain is Pathogenesis-related protein, found in Cucumis melo (Muskmelon).